The sequence spans 161 residues: Glycine-rich RNA-binding protein blt801 (161 aa).

The region spanning Tyr6 to Ser84 is the RRM domain. A disordered region spans residues Leu72 to Glu161. Ser87 bears the Phosphoserine; by PKA mark. The segment covering Gly89–Glu161 has biased composition (gly residues).

Its function is as follows. Binds single-stranded DNA and homoribopolymers of guanine, uracil and adenine, but not cytosine. Also binds RNA, with a preference for RNA containing a high proportion of adenine within an open loop structure. Possibly has a role in RNA transcription or processing during stress. This chain is Glycine-rich RNA-binding protein blt801, found in Hordeum vulgare (Barley).